Reading from the N-terminus, the 635-residue chain is Isethionate TRAP transporter permease protein DctMQ (635 aa).

16 helical membrane passes run 38–58 (KPFL…QTLY), 75–95 (TEEM…PVAI), 117–137 (ISWI…LWQS), 154–174 (LQLP…LMAV), 192–212 (TVIG…ADYI), 217–237 (VLFG…IGLG), 266–286 (FPIM…AGGL), 299–319 (GALP…FAAI), 350–370 (AIVA…PFVV), 379–399 (IGKL…ALMA), 431–451 (WALM…MTPT), 453–473 (AAAL…RELS), 481–501 (VVEA…ATIF), 526–546 (IAIL…MEAL), 572–592 (IIMV…VNLF), and 609–629 (VLPL…VPAI).

In the N-terminal section; belongs to the TRAP transporter small permease family. It in the C-terminal section; belongs to the TRAP transporter large permease family. In terms of assembly, the complex comprises the periplasmic solute receptor protein DctP, and the fused transmembrane protein DctMQ.

The protein resides in the cell inner membrane. It participates in organosulfur degradation; alkanesulfonate degradation. Its function is as follows. Part of the tripartite ATP-independent periplasmic (TRAP) transport system DctPQM involved in the uptake of isethionate (2-hydroxyethanesulfonate), which is then catabolized by enzymes encoded by adjacent genes in the locus. Thereby is involved in an anaerobic respiration pathway that converts the sulfonate isethionate to ammonia, acetate and sulfide. In Oleidesulfovibrio alaskensis (strain ATCC BAA-1058 / DSM 17464 / G20) (Desulfovibrio alaskensis), this protein is Isethionate TRAP transporter permease protein DctMQ.